We begin with the raw amino-acid sequence, 646 residues long: ATP-dependent zinc metalloprotease FtsH (646 aa).

Over 1-4 (MTRS) the chain is Cytoplasmic. A helical membrane pass occupies residues 5–25 (LLWQMVIVLGAILMVNYVLTT). The Periplasmic segment spans residues 26-120 (LTPQTQEPVV…VRPESKPSPW (95 aa)). A helical transmembrane segment spans residues 121 to 141 (ATAMIYMLPWLLIVGVWWFVI). Residues 142 to 646 (KGMRTRQGPG…GELAGGAVEG (505 aa)) lie on the Cytoplasmic side of the membrane. 216–223 (GPPGTGKT) provides a ligand contact to ATP. His437 contributes to the Zn(2+) binding site. The active site involves Glu438. His441 and Asp513 together coordinate Zn(2+).

The protein in the central section; belongs to the AAA ATPase family. This sequence in the C-terminal section; belongs to the peptidase M41 family. In terms of assembly, homohexamer. Zn(2+) is required as a cofactor.

The protein localises to the cell inner membrane. Acts as a processive, ATP-dependent zinc metallopeptidase for both cytoplasmic and membrane proteins. Plays a role in the quality control of integral membrane proteins. The polypeptide is ATP-dependent zinc metalloprotease FtsH (Syntrophotalea carbinolica (strain DSM 2380 / NBRC 103641 / GraBd1) (Pelobacter carbinolicus)).